Consider the following 553-residue polypeptide: NAD(P)H-quinone oxidoreductase chain 4 2 (553 aa).

A run of 14 helical transmembrane segments spans residues 6 to 26 (FPWL…IPVI), 34 to 54 (VRWF…YVFL), 87 to 107 (ISAP…LAAW), 115 to 135 (LFYF…VAQD), 136 to 156 (LLLF…LVSI), 169 to 189 (FLLY…AMAL), 210 to 230 (ALEL…LAIF), 244 to 264 (SAPV…YGLI), 276 to 296 (IYFA…GAFA), 312 to 332 (VSHM…GISG), 333 to 353 (AMLQ…LAGV), 376 to 396 (VFAL…MSGF), 418 to 438 (VVTV…LLSM), and 487 to 507 (IFIA…PQLA).

Belongs to the complex I subunit 4 family.

It localises to the cellular thylakoid membrane. It carries out the reaction a plastoquinone + NADH + (n+1) H(+)(in) = a plastoquinol + NAD(+) + n H(+)(out). It catalyses the reaction a plastoquinone + NADPH + (n+1) H(+)(in) = a plastoquinol + NADP(+) + n H(+)(out). In terms of biological role, NDH-1 shuttles electrons from NAD(P)H, via FMN and iron-sulfur (Fe-S) centers, to quinones in the respiratory chain. The immediate electron acceptor for the enzyme in this species is believed to be plastoquinone. Couples the redox reaction to proton translocation (for every two electrons transferred, four hydrogen ions are translocated across the cytoplasmic membrane), and thus conserves the redox energy in a proton gradient. The protein is NAD(P)H-quinone oxidoreductase chain 4 2 of Microcystis aeruginosa (strain NIES-843 / IAM M-2473).